We begin with the raw amino-acid sequence, 298 residues long: MNKNMSIVGVPMDLGADRRGVDMGPSAIRYAGVVARLEKMGFNIEDRGDIFVTLPHHFTETENHKYLDEVVEANEKLANVVSDIMTAGRFPLVLGGDHSIALGTIAGVAKHVKNLGVICLDAHGDLNTGATSPSGNIHGMPLAASLGYGHERLTNIGGYTPKVKAENVVIIGARDLDQGERELIKRIGMKVFTMHEIDKLGMARVMDEAIAHVSKNTDGVHLSLDLDGLDPHDAPGVGTPVIGGISYREGHVSLEMLADADILCSAEFVEVNPILDRENMTARVAVALMSSVFGDKLL.

Mn(2+) contacts are provided by H98, D121, H123, and D125. Substrate contacts are provided by residues 123–127 (HGDLN), 134–136 (SGN), and D177. Mn(2+)-binding residues include D225 and D227. Residues T239 and E270 each coordinate substrate.

Belongs to the arginase family. Mn(2+) is required as a cofactor.

It catalyses the reaction L-arginine + H2O = urea + L-ornithine. Its pathway is nitrogen metabolism; urea cycle; L-ornithine and urea from L-arginine: step 1/1. This chain is Arginase (rocF), found in Brevibacillus brevis (Bacillus brevis).